The following is a 278-amino-acid chain: Truncated FRIGIDA-like protein 1 (278 aa).

Residues 1 to 36 (MTASETIATAINQIDEKKEKLKKAFDDLQAHRSLLS) adopt a coiled-coil conformation.

The protein belongs to the Frigida family.

Functionally, truncated inactive FRIGIDA-like 1 protein. This is Truncated FRIGIDA-like protein 1 (FRL1) from Arabidopsis thaliana (Mouse-ear cress).